A 154-amino-acid chain; its full sequence is Ribosomal RNA large subunit methyltransferase H (154 aa).

Residues Gly103 and Phe122–Phe127 contribute to the S-adenosyl-L-methionine site.

This sequence belongs to the RNA methyltransferase RlmH family. Homodimer.

The protein localises to the cytoplasm. The catalysed reaction is pseudouridine(1915) in 23S rRNA + S-adenosyl-L-methionine = N(3)-methylpseudouridine(1915) in 23S rRNA + S-adenosyl-L-homocysteine + H(+). In terms of biological role, specifically methylates the pseudouridine at position 1915 (m3Psi1915) in 23S rRNA. The polypeptide is Ribosomal RNA large subunit methyltransferase H (Caldicellulosiruptor bescii (strain ATCC BAA-1888 / DSM 6725 / KCTC 15123 / Z-1320) (Anaerocellum thermophilum)).